A 1414-amino-acid chain; its full sequence is DNA-directed RNA polymerase subunit beta'' (1414 aa).

Zn(2+) contacts are provided by cysteine 220, cysteine 293, cysteine 300, and cysteine 303.

Belongs to the RNA polymerase beta' chain family. RpoC2 subfamily. In plastids the minimal PEP RNA polymerase catalytic core is composed of four subunits: alpha, beta, beta', and beta''. When a (nuclear-encoded) sigma factor is associated with the core the holoenzyme is formed, which can initiate transcription. Zn(2+) serves as cofactor.

Its subcellular location is the plastid. The protein localises to the chloroplast. The enzyme catalyses RNA(n) + a ribonucleoside 5'-triphosphate = RNA(n+1) + diphosphate. DNA-dependent RNA polymerase catalyzes the transcription of DNA into RNA using the four ribonucleoside triphosphates as substrates. This is DNA-directed RNA polymerase subunit beta'' from Angiopteris evecta (Mule's foot fern).